A 93-amino-acid chain; its full sequence is Early E3A 10.5 kDa glycoprotein (93 aa).

Asn-3 carries an N-linked (GlcNAc...) asparagine; by host glycan. The chain crosses the membrane as a helical span at residues Met-34 to Leu-55.

Belongs to the adenoviridae E3A-1 family. In terms of processing, N-glycosylated and probably also O-glycosylated.

Its subcellular location is the host nucleus membrane. The protein is Early E3A 10.5 kDa glycoprotein of Homo sapiens (Human).